A 254-amino-acid polypeptide reads, in one-letter code: 5'-nucleotidase SurE (254 aa).

Residues aspartate 8, aspartate 9, serine 39, and asparagine 97 each coordinate a divalent metal cation.

Belongs to the SurE nucleotidase family. A divalent metal cation serves as cofactor.

It localises to the cytoplasm. It catalyses the reaction a ribonucleoside 5'-phosphate + H2O = a ribonucleoside + phosphate. Nucleotidase that shows phosphatase activity on nucleoside 5'-monophosphates. In Alkaliphilus metalliredigens (strain QYMF), this protein is 5'-nucleotidase SurE.